A 97-amino-acid polypeptide reads, in one-letter code: MKFVAIFLVTCVLFSLFPSHLSQGEESRMNINAERRPWCPSKIQMFDTNCEVDGAKQCLDLLISTWDPSVRLTRVSCICSDFPYRNMMCSCPNMICP.

The signal sequence occupies residues 1–24 (MKFVAIFLVTCVLFSLFPSHLSQG). Intrachain disulfides connect cysteine 39/cysteine 96, cysteine 50/cysteine 79, cysteine 58/cysteine 89, and cysteine 77/cysteine 91.

Belongs to the DEFL family. As to expression, flower buds and stems.

It is found in the secreted. This Arabidopsis thaliana (Mouse-ear cress) protein is Defensin-like protein 246 (SCRL5).